Here is a 662-residue protein sequence, read N- to C-terminus: Polyunsaturated fatty acid lipoxygenase ALOX15 (662 aa).

The region spanning 2–114 (GLYRIRVSTG…VLSLPEGTGR (113 aa)) is the PLAT domain. The Lipoxygenase domain occupies 115-662 (TVGDDPQGLF…PSIVENSVAI (548 aa)). Positions 360, 365, 540, 544, and 662 each coordinate Fe cation.

This sequence belongs to the lipoxygenase family. In terms of assembly, interacts with PEBP1; in response to IL13/interleukin-13, prevents the interaction of PEBP1 with RAF1 to activate the ERK signaling cascade. Fe cation is required as a cofactor.

The protein resides in the cytoplasm. The protein localises to the cytosol. It localises to the cell membrane. Its subcellular location is the lipid droplet. The catalysed reaction is (5Z,8Z,11Z,14Z)-eicosatetraenoate + O2 = (12S)-hydroperoxy-(5Z,8Z,10E,14Z)-eicosatetraenoate. The enzyme catalyses (9Z,12Z)-octadecadienoate + O2 = (13S)-hydroperoxy-(9Z,11E)-octadecadienoate. It carries out the reaction (5Z,8Z,11Z,14Z)-eicosatetraenoate + O2 = (15S)-hydroperoxy-(5Z,8Z,11Z,13E)-eicosatetraenoate. It catalyses the reaction (5Z,8Z,11Z,14Z)-eicosatetraenoate + 2 O2 = (14R,15S)-dihydroperoxy-(5Z,8Z,10E,12E)-eicosatetraenoate. The catalysed reaction is (5Z,8Z,11Z,14Z)-eicosatetraenoate + 2 O2 = (8S,15S)-dihydroperoxy-(5Z,9E,11Z,13E)-eicosatetraenoate. The enzyme catalyses (14S,15R)-epoxy-(5Z,8Z,11Z)-eicosatrienoate + O2 = (8S)-hydroperoxy-(14S,15R)-epoxy-(5Z,9E,11Z)-eicosatrienoate. It carries out the reaction (14S,15R)-epoxy-(5Z,8Z,11Z)-eicosatrienoate + O2 = (12S)-hydroperoxy-(14S,15R)-epoxy-(5Z,8Z,10E)-eicosatrienoate. It catalyses the reaction (14R,15S)-epoxy-(5Z,8Z,11Z)-eicosatrienoate + O2 = (5S)-hydroperoxy-(14R,15S)-epoxy-(6E,8Z,11Z)-eicosatrienoate. The catalysed reaction is (14R,15S)-epoxy-(5Z,8Z,11Z)-eicosatrienoate + O2 = (12S)-hydroperoxy-(14R,15S)-epoxy-(5Z,8Z,10E)-eicosatrienoate. The enzyme catalyses (15R)-hydroperoxy-(5Z,8Z,11Z,13E)-eicosatetraenoate = 15-oxo-(5Z,8Z,11Z,13E)-eicosatetraenoate + H2O. It carries out the reaction (15S)-hydroperoxy-(5Z,8Z,11Z,13E)-eicosatetraenoate = (14S,15S)-epoxy-(5Z,8Z,10E,12E)-eicosatetraenoate + H2O. It catalyses the reaction (12S)-hydroperoxy-(5Z,8Z,10E,14Z)-eicosatetraenoate = (8S)-hydroxy-(11S,12S)-epoxy-(5Z,9E,14Z)-eicosatrienoate. The catalysed reaction is (4Z,7Z,10Z,13Z,16Z)-docosapentaenoate + O2 = 14-hydroperoxy-(4Z,7Z,10Z,12E,16Z)-docosapentaenoate. The enzyme catalyses (7Z,10Z,13Z,16Z,19Z)-docosapentaenoate + O2 = 14-hydroperoxy-(7Z,10Z,12E,16Z,19Z)-docosapentaenoate. It carries out the reaction (4Z,7Z,10Z,13Z,16Z,19Z)-docosahexaenoate + O2 = (14S)-hydroperoxy-(4Z,7Z,10Z,12E,16Z,19Z)-docosahexaenoate. It catalyses the reaction (4Z,7Z,10Z,13Z,16Z,19Z)-docosahexaenoate + O2 = (17S)-hydroperoxy-(4Z,7Z,10Z,13Z,15E,19Z)-docosahexaenoate. The catalysed reaction is (7S)-hydroperoxy-(4Z,8E,10Z,13Z,16Z,19Z)-docosahexaenoate + O2 = (7S,14S)-dihydroperoxy-(4Z,8E,10Z,12E,16Z,19Z)-docosahexaenoate. The enzyme catalyses (7S)-hydroperoxy-(4Z,8E,10Z,13Z,16Z,19Z)-docosahexaenoate + O2 = (7S,17S)-dihydroperoxy-(4Z,8E,10Z,13Z,15E,19Z)-docosahexaenoate. It carries out the reaction (4Z,7Z,10Z,13Z,16Z,19Z)-docosahexaenoate + O2 = (11S)-hydroperoxy-(4Z,7Z,9E,13Z,16Z,19Z)-docosahexaenoate. It catalyses the reaction N-(5Z,8Z,11Z,14Z)-eicosatetraenoyl-taurine + O2 = N-(12S)-hydroperoxy-(5Z,8Z,10E,14Z)-eicosatetraenoyl-taurine. The catalysed reaction is N-(5Z,8Z,11Z,14Z)-eicosatetraenoyl-gamma-aminobutanoate + O2 = N-(12S)-hydroperoxy-(5Z,8Z,10E,14Z)-eicosatetraenoyl-gamma-aminobutanoate. The enzyme catalyses N-(5Z,8Z,11Z,14Z)-eicosatetraenoyl-glycine + O2 = N-(12S)-hydroperoxy-(5Z,8Z,10E,14Z)-eicosatetraenoyl-glycine. It carries out the reaction N-(5Z,8Z,11Z,14Z)-eicosatetraenoyl-L-alanine + O2 = N-(12S)-hydroperoxy-(5Z,8Z,10E,14Z)-eicosatetraenoyl-alanine. It catalyses the reaction N-(5Z,8Z,11Z,14Z)-eicosatetraenoyl-taurine + O2 = N-(15S)-hydroperoxy-(5Z,8Z,11Z,13E)-eicosatetraenoyl-taurine. The catalysed reaction is N-(5Z,8Z,11Z,14Z)-eicosatetraenoyl-gamma-aminobutanoate + O2 = N-(15S)-hydroperoxy-(5Z,8Z,11Z,13E)-eicosatetraenoyl-gamma-aminobutanoate. The enzyme catalyses N-(5Z,8Z,11Z,14Z)-eicosatetraenoyl-glycine + O2 = N-(15S)-hydroperoxy-(5Z,8Z,11Z,13E)-eicosatetraenoyl-glycine. It carries out the reaction N-(5Z,8Z,11Z,14Z)-eicosatetraenoyl-L-alanine + O2 = N-(15S)-hydroperoxy-(5Z,8Z,11Z,13E)-eicosatetraenoyl-alanine. It participates in lipid metabolism; hydroperoxy eicosatetraenoic acid biosynthesis. Its function is as follows. Non-heme iron-containing dioxygenase that catalyzes the stereo-specific peroxidation of free and esterified polyunsaturated fatty acids generating a spectrum of bioactive lipid mediators. It inserts peroxyl groups at C12 or C15 of arachidonate ((5Z,8Z,11Z,14Z)-eicosatetraenoate) producing both 12-hydroperoxyeicosatetraenoate/12-HPETE and 15-hydroperoxyeicosatetraenoate/15-HPETE. It may then act on 12-HPETE to produce hepoxilins, which may show pro-inflammatory properties. Can also peroxidize linoleate ((9Z,12Z)-octadecadienoate) to 13-hydroperoxyoctadecadienoate. May participate in the sequential oxidations of DHA ((4Z,7Z,10Z,13Z,16Z,19Z)-docosahexaenoate) to generate specialized pro-resolving mediators (SPMs)like resolvin D5 ((7S,17S)-diHPDHA) and (7S,14S)-diHPDHA, that actively down-regulate the immune response and have anti-aggregation properties with platelets. Can convert epoxy fatty acids to hydroperoxy-epoxides derivatives followed by an intramolecular nucleophilic substitution leading to the formation of monocyclic endoperoxides. Plays an important role during the maintenance of self-tolerance by peroxidizing membrane-bound phosphatidylethanolamine which can then signal the sorting process for clearance of apoptotic cells during inflammation and prevent an autoimmune response. In addition to its role in the immune and inflammatory responses, this enzyme may play a role in epithelial wound healing in the cornea through production of lipoxin A4 (LXA(4)) and docosahexaenoic acid-derived neuroprotectin D1 (NPD1; 10R,17S-HDHA), both lipid autacoids exhibit anti-inflammatory and neuroprotective properties. Furthermore, it may regulate actin polymerization which is crucial for several biological processes such as the phagocytosis of apoptotic cells. It is also implicated in the generation of endogenous ligands for peroxisome proliferator activated receptor (PPAR-gamma), hence modulating macrophage development and function. It may also exert a negative effect on skeletal development by regulating bone mass through this pathway. As well as participates in ER stress and downstream inflammation in adipocytes, pancreatic islets, and liver. Finally, it is also involved in the cellular response to IL13/interleukin-13. This is Polyunsaturated fatty acid lipoxygenase ALOX15 from Pongo abelii (Sumatran orangutan).